We begin with the raw amino-acid sequence, 216 residues long: Probable nicotinate-nucleotide adenylyltransferase (216 aa).

It belongs to the NadD family.

It catalyses the reaction nicotinate beta-D-ribonucleotide + ATP + H(+) = deamido-NAD(+) + diphosphate. Its pathway is cofactor biosynthesis; NAD(+) biosynthesis; deamido-NAD(+) from nicotinate D-ribonucleotide: step 1/1. In terms of biological role, catalyzes the reversible adenylation of nicotinate mononucleotide (NaMN) to nicotinic acid adenine dinucleotide (NaAD). In Maridesulfovibrio salexigens (strain ATCC 14822 / DSM 2638 / NCIMB 8403 / VKM B-1763) (Desulfovibrio salexigens), this protein is Probable nicotinate-nucleotide adenylyltransferase.